The primary structure comprises 134 residues: Small ribosomal subunit protein uS9 (134 aa).

The interval 114 to 134 is disordered; it reads EVERKKYGLKKARRAPQFSKR. Positions 120–134 are enriched in basic residues; it reads YGLKKARRAPQFSKR.

It belongs to the universal ribosomal protein uS9 family.

The sequence is that of Small ribosomal subunit protein uS9 from Thermotoga sp. (strain RQ2).